We begin with the raw amino-acid sequence, 417 residues long: UDP-N-acetylglucosamine 1-carboxyvinyltransferase (417 aa).

22 to 23 (KN) is a phosphoenolpyruvate binding site. R93 serves as a coordination point for UDP-N-acetyl-alpha-D-glucosamine. Catalysis depends on C117, which acts as the Proton donor. C117 carries the post-translational modification 2-(S-cysteinyl)pyruvic acid O-phosphothioketal. UDP-N-acetyl-alpha-D-glucosamine contacts are provided by residues 122 to 126 (RPVDQ), D305, and I327.

It belongs to the EPSP synthase family. MurA subfamily.

The protein resides in the cytoplasm. It carries out the reaction phosphoenolpyruvate + UDP-N-acetyl-alpha-D-glucosamine = UDP-N-acetyl-3-O-(1-carboxyvinyl)-alpha-D-glucosamine + phosphate. The protein operates within cell wall biogenesis; peptidoglycan biosynthesis. Its function is as follows. Cell wall formation. Adds enolpyruvyl to UDP-N-acetylglucosamine. In Dechloromonas aromatica (strain RCB), this protein is UDP-N-acetylglucosamine 1-carboxyvinyltransferase.